Reading from the N-terminus, the 194-residue chain is Small ribosomal subunit protein uS4c (194 aa).

An S4 RNA-binding domain is found at 82 to 143 (MRLDNILFRL…KQRSKALIQD (62 aa)).

The protein belongs to the universal ribosomal protein uS4 family. As to quaternary structure, part of the 30S ribosomal subunit. Contacts protein S5. The interaction surface between S4 and S5 is involved in control of translational fidelity.

The protein localises to the plastid. It is found in the chloroplast. One of the primary rRNA binding proteins, it binds directly to 16S rRNA where it nucleates assembly of the body of the 30S subunit. Its function is as follows. With S5 and S12 plays an important role in translational accuracy. This chain is Small ribosomal subunit protein uS4c (rps4), found in Bobartia gladiata (Sword rush-lily).